A 367-amino-acid chain; its full sequence is Aurora kinase (367 aa).

2 stretches are compositionally biased toward polar residues: residues 1 to 29 (MQRN…TSRI) and 37 to 48 (HSPQQRNPNSKI). Positions 1–52 (MQRNSLVNIKLNANSPSKKTTTRPNTSRINKPWRISHSPQQRNPNSKIPSPV) are disordered. S5 carries the phosphoserine; by autocatalysis modification. S76 bears the Phosphoserine mark. In terms of domain architecture, Protein kinase spans 104-355 (FELGKKLGKG…LGDVKMHPWI (252 aa)). Residues 110 to 118 (LGKGKFGKV) and K133 contribute to the ATP site. The active-site Proton acceptor is D227. T260 carries the post-translational modification Phosphothreonine; by autocatalysis.

It belongs to the protein kinase superfamily. Ser/Thr protein kinase family. Aurora subfamily. In terms of assembly, component of the CPC complex at least composed of IPL1, BIR1 and SLI15.

The protein localises to the nucleus. The protein resides in the cytoplasm. It is found in the cytoskeleton. It localises to the spindle. Its subcellular location is the chromosome. The protein localises to the centromere. The protein resides in the kinetochore. It carries out the reaction L-seryl-[protein] + ATP = O-phospho-L-seryl-[protein] + ADP + H(+). The enzyme catalyses L-threonyl-[protein] + ATP = O-phospho-L-threonyl-[protein] + ADP + H(+). In terms of biological role, component of the chromosomal passenger complex (CPC), a complex that acts as a key regulator of chromosome segregation and cytokinesis. Has a role in error-correction of aberrent kinetochore-microtubule attachments to ensure that sister kinetochores become bioriented and connect to opposite poles by promoting spindle assembly checkpoint signaling. Acts in opposition to the phosphatase PP1. Not required for kinetochore detachment from microtubules during replication of centromeric DNA. Phosphorylates histone H3 to form H3S10ph during mitosis and meiosis. Phosphorylates CNN1, which contributes to the enrichment of CNN1 on anaphase kinetochores. Phosphorylates RGD1. This is Aurora kinase (IPL1) from Saccharomyces cerevisiae (strain ATCC 204508 / S288c) (Baker's yeast).